We begin with the raw amino-acid sequence, 60 residues long: Large ribosomal subunit protein bL32 (60 aa).

The segment at 1–60 is disordered; the sequence is MAVQQVKKSRSKRDIRRSHDSLTNPTLSTDKSTGELHLRHHVSPNGFYKGRKVVDTKSED. Over residues 7-16 the composition is skewed to basic residues; that stretch reads KKSRSKRDIR. A compositionally biased stretch (polar residues) spans 22–31; sequence LTNPTLSTDK.

Belongs to the bacterial ribosomal protein bL32 family.

The polypeptide is Large ribosomal subunit protein bL32 (Francisella tularensis subsp. tularensis (strain SCHU S4 / Schu 4)).